The chain runs to 620 residues: Chaperone protein HscA homolog (620 aa).

It belongs to the heat shock protein 70 family.

In terms of biological role, chaperone involved in the maturation of iron-sulfur cluster-containing proteins. Has a low intrinsic ATPase activity which is markedly stimulated by HscB. This Janthinobacterium sp. (strain Marseille) (Minibacterium massiliensis) protein is Chaperone protein HscA homolog.